Consider the following 873-residue polypeptide: F-box only protein 41 (873 aa).

Positions 85–97 are enriched in polar residues; it reads ESTSFQGKEQATG. Disordered regions lie at residues 85-110, 163-193, and 345-540; these read ESTS…HHHH, SSAC…SPAD, and SSSC…PSRS. Pro residues predominate over residues 168-178; that stretch reads TPPPGPGPGPC. Over residues 179 to 192 the composition is skewed to low complexity; it reads SGPSSASPASPSPA. Residues 207–349 are a coiled coil; sequence ALEKLEVDRR…QLQVISSSCG (143 aa). Residues 357–371 show a composition bias toward gly residues; the sequence is GRGGGGSASGPGVRG. Residue Arg-358 is modified to Omega-N-methylarginine. 2 stretches are compositionally biased toward polar residues: residues 384-414 and 442-456; these read VPST…SSGC and AQAT…QAPR. A Phosphoserine modification is found at Ser-476. A Phosphothreonine modification is found at Thr-477. Positions 548–592 constitute an F-box domain; sequence ILKMRAALFCIFTYLDTRTLLHAAEVCRDWRFVARHPAVWTRVLL. Ser-760 carries the post-translational modification Phosphoserine.

Directly interacts with SKP1 and CUL1.

Its function is as follows. Substrate-recognition component of the SCF (SKP1-CUL1-F-box protein)-type E3 ubiquitin ligase complex. In Mus musculus (Mouse), this protein is F-box only protein 41 (Fbxo41).